The primary structure comprises 506 residues: ATP synthase subunit alpha (506 aa).

170–177 (GDRQTGKT) contacts ATP.

Belongs to the ATPase alpha/beta chains family. As to quaternary structure, F-type ATPases have 2 components, CF(1) - the catalytic core - and CF(0) - the membrane proton channel. CF(1) has five subunits: alpha(3), beta(3), gamma(1), delta(1), epsilon(1). CF(0) has four main subunits: a(1), b(1), b'(1) and c(9-12).

It localises to the cellular thylakoid membrane. It catalyses the reaction ATP + H2O + 4 H(+)(in) = ADP + phosphate + 5 H(+)(out). Produces ATP from ADP in the presence of a proton gradient across the membrane. The alpha chain is a regulatory subunit. The protein is ATP synthase subunit alpha of Synechococcus sp. (strain CC9902).